The chain runs to 211 residues: Thymidylate kinase (211 aa).

Position 10 to 17 (10 to 17 (GLDGSGKT)) interacts with ATP.

It belongs to the thymidylate kinase family.

The enzyme catalyses dTMP + ATP = dTDP + ADP. In terms of biological role, phosphorylation of dTMP to form dTDP in both de novo and salvage pathways of dTTP synthesis. The chain is Thymidylate kinase from Blochmanniella floridana.